A 139-amino-acid polypeptide reads, in one-letter code: Large ribosomal subunit protein bL17 (139 aa).

The segment at 120 to 139 (ESAKGQDSGPVHVEGDEEAA) is disordered.

The protein belongs to the bacterial ribosomal protein bL17 family. As to quaternary structure, part of the 50S ribosomal subunit. Contacts protein L32.

The protein is Large ribosomal subunit protein bL17 of Parvibaculum lavamentivorans (strain DS-1 / DSM 13023 / NCIMB 13966).